The sequence spans 584 residues: 2-succinyl-5-enolpyruvyl-6-hydroxy-3-cyclohexene-1-carboxylate synthase (584 aa).

The protein belongs to the TPP enzyme family. MenD subfamily. As to quaternary structure, homodimer. It depends on Mg(2+) as a cofactor. The cofactor is Mn(2+). Thiamine diphosphate serves as cofactor.

It carries out the reaction isochorismate + 2-oxoglutarate + H(+) = 5-enolpyruvoyl-6-hydroxy-2-succinyl-cyclohex-3-ene-1-carboxylate + CO2. It functions in the pathway quinol/quinone metabolism; 1,4-dihydroxy-2-naphthoate biosynthesis; 1,4-dihydroxy-2-naphthoate from chorismate: step 2/7. It participates in quinol/quinone metabolism; menaquinone biosynthesis. In terms of biological role, catalyzes the thiamine diphosphate-dependent decarboxylation of 2-oxoglutarate and the subsequent addition of the resulting succinic semialdehyde-thiamine pyrophosphate anion to isochorismate to yield 2-succinyl-5-enolpyruvyl-6-hydroxy-3-cyclohexene-1-carboxylate (SEPHCHC). The chain is 2-succinyl-5-enolpyruvyl-6-hydroxy-3-cyclohexene-1-carboxylate synthase from Bacillus thuringiensis (strain Al Hakam).